We begin with the raw amino-acid sequence, 827 residues long: Periplasmic nitrate reductase (827 aa).

The tat-type signal signal peptide spans 1 to 34 (MSLTRRDFIKANAVAATAAAAGIATPAIAQPAKA). The 57-residue stretch at 36–92 (IRWDKGVCRFCGTGCAVLVGVQDGRVVATQGDPDSPVNRGLNCIKGYFLSKIMYGED) folds into the 4Fe-4S Mo/W bis-MGD-type domain. [4Fe-4S] cluster is bound by residues Cys-43, Cys-46, Cys-50, and Cys-78. Mo-bis(molybdopterin guanine dinucleotide)-binding positions include Lys-80, Gln-148, Asn-173, Cys-177, 210–217 (WGSNMAEM), 241–245 (STFEH), 260–262 (QTD), Met-371, Gln-375, Asn-481, 507–508 (SD), Lys-530, Asp-557, and 717–726 (TGRVLEHWHS). Phe-793 provides a ligand contact to substrate. Asn-801 and Lys-818 together coordinate Mo-bis(molybdopterin guanine dinucleotide).

Belongs to the prokaryotic molybdopterin-containing oxidoreductase family. NasA/NapA/NarB subfamily. As to quaternary structure, component of the periplasmic nitrate reductase NapAB complex composed of NapA and NapB. It depends on [4Fe-4S] cluster as a cofactor. Requires Mo-bis(molybdopterin guanine dinucleotide) as cofactor. Post-translationally, predicted to be exported by the Tat system. The position of the signal peptide cleavage has not been experimentally proven.

The protein localises to the periplasm. The enzyme catalyses 2 Fe(II)-[cytochrome] + nitrate + 2 H(+) = 2 Fe(III)-[cytochrome] + nitrite + H2O. Its function is as follows. Catalytic subunit of the periplasmic nitrate reductase complex NapAB. Receives electrons from NapB and catalyzes the reduction of nitrate to nitrite. The protein is Periplasmic nitrate reductase of Paramagnetospirillum magneticum (strain ATCC 700264 / AMB-1) (Magnetospirillum magneticum).